A 403-amino-acid chain; its full sequence is Large ribosomal subunit protein uL3 (403 aa).

The tract at residues 1–37 is disordered; sequence MSHRKFSAPRHGSLGFLPRKRSSRHRGKVKSFPKDDP. A Phosphoserine modification is found at serine 13. The span at 18–31 shows a compositional bias: basic residues; it reads PRKRSSRHRGKVKS. Lysine 39 participates in a covalent cross-link: Glycyl lysine isopeptide (Lys-Gly) (interchain with G-Cter in SUMO2). Position 136 is an N6-acetyllysine (lysine 136). Glycyl lysine isopeptide (Lys-Gly) (interchain with G-Cter in SUMO2) cross-links involve residues lysine 224 and lysine 226. Position 245 is a tele-methylhistidine (histidine 245). 2 positions are modified to N6-acetyllysine; alternate: lysine 286 and lysine 294. A Glycyl lysine isopeptide (Lys-Gly) (interchain with G-Cter in SUMO2); alternate cross-link involves residue lysine 286. A Glycyl lysine isopeptide (Lys-Gly) (interchain with G-Cter in SUMO1); alternate cross-link involves residue lysine 294. Serine 304 bears the Phosphoserine mark. At lysine 366 the chain carries N6-acetyllysine; alternate. A Glycyl lysine isopeptide (Lys-Gly) (interchain with G-Cter in SUMO2); alternate cross-link involves residue lysine 366. Lysine 373 is subject to N6-acetyllysine. Residues lysine 386, lysine 393, and lysine 399 each participate in a glycyl lysine isopeptide (Lys-Gly) (interchain with G-Cter in SUMO2) cross-link.

It belongs to the universal ribosomal protein uL3 family. In terms of assembly, component of the large ribosomal subunit. Interacts with DHX33. In terms of processing, constitutively monomethylated at His-245 by METTL18. Methylation at His-245 regulates translation elongation by slowing ribosome traversal on tyrosine codons: slower elongation provides enough time for proper folding of synthesized proteins and prevents cellular aggregation of tyrosine-rich proteins It is not required for incorporation of RPL3 into ribosomes.

The protein localises to the nucleus. It localises to the nucleolus. The protein resides in the cytoplasm. Functionally, component of the large ribosomal subunit. The ribosome is a large ribonucleoprotein complex responsible for the synthesis of proteins in the cell. The polypeptide is Large ribosomal subunit protein uL3 (RPL3) (Macaca fascicularis (Crab-eating macaque)).